We begin with the raw amino-acid sequence, 286 residues long: Phosphoribosylaminoimidazole-succinocarboxamide synthase (286 aa).

Belongs to the SAICAR synthetase family.

It carries out the reaction 5-amino-1-(5-phospho-D-ribosyl)imidazole-4-carboxylate + L-aspartate + ATP = (2S)-2-[5-amino-1-(5-phospho-beta-D-ribosyl)imidazole-4-carboxamido]succinate + ADP + phosphate + 2 H(+). Its pathway is purine metabolism; IMP biosynthesis via de novo pathway; 5-amino-1-(5-phospho-D-ribosyl)imidazole-4-carboxamide from 5-amino-1-(5-phospho-D-ribosyl)imidazole-4-carboxylate: step 1/2. The protein is Phosphoribosylaminoimidazole-succinocarboxamide synthase of Actinobacillus succinogenes (strain ATCC 55618 / DSM 22257 / CCUG 43843 / 130Z).